The following is a 124-amino-acid chain: Glycine cleavage system H protein (124 aa).

The Lipoyl-binding domain occupies 19 to 101 (VATVGITNHA…EGEGWLFKME (83 aa)). Position 60 is an N6-lipoyllysine (Lys-60).

It belongs to the GcvH family. The glycine cleavage system is composed of four proteins: P, T, L and H. It depends on (R)-lipoate as a cofactor.

Functionally, the glycine cleavage system catalyzes the degradation of glycine. The H protein shuttles the methylamine group of glycine from the P protein to the T protein. In Thermotoga maritima (strain ATCC 43589 / DSM 3109 / JCM 10099 / NBRC 100826 / MSB8), this protein is Glycine cleavage system H protein.